The sequence spans 239 residues: MAKPCGVRLSGEALKQVDVFRQNLFQEAEEFLYRFLPQKIIYLNQLLQEDSFNVTDLNSLRAPLDIPIPDPPPKDDEMETDKQEKKEVPKCGFLPGNEKVLALLALVKPEVWTLKEKCILVITWIQHLIPKIEDGNDFGVAIQEKVLERVNAVKTKVEAFQTTISKYFSERGDAVAKASKETHVMDYRALVHERDEAVYGDLRAMVLDLRAFYAELYHIISSNLEKIVNPKGEEKPSMY.

N-acetylalanine is present on Ala-2. Residue Ser-10 is modified to Phosphoserine. The disordered stretch occupies residues 65–86 (DIPIPDPPPKDDEMETDKQEKK). Over residues 72–86 (PPKDDEMETDKQEKK) the composition is skewed to basic and acidic residues.

It belongs to the PA28 family. Heterodimer of PSME1 and PSME2, which forms a hexameric ring.

Its function is as follows. Implicated in immunoproteasome assembly and required for efficient antigen processing. The PA28 activator complex enhances the generation of class I binding peptides by altering the cleavage pattern of the proteasome. This Bos taurus (Bovine) protein is Proteasome activator complex subunit 2 (PSME2).